Consider the following 423-residue polypeptide: Putative galacturan 1,4-alpha-galacturonidase C (423 aa).

A signal peptide spans 1–20 (MRFSIISLVSLPLFLGLTYA). 5 N-linked (GlcNAc...) asparagine glycosylation sites follow: Asn-100, Asn-120, Asn-150, Asn-173, and Asn-185. Residue Asp-229 is the Proton donor of the active site. An intrachain disulfide couples Cys-231 to Cys-248. Asn-245 carries an N-linked (GlcNAc...) asparagine glycan. Residue Asn-252 is part of the active site. Asn-344 and Asn-362 each carry an N-linked (GlcNAc...) asparagine glycan. Cys-379 and Cys-385 are disulfide-bonded. Asn-400 carries N-linked (GlcNAc...) asparagine glycosylation. An intrachain disulfide couples Cys-409 to Cys-423.

Belongs to the glycosyl hydrolase 28 family.

The protein localises to the secreted. The enzyme catalyses [(1-&gt;4)-alpha-D-galacturonosyl](n) + H2O = alpha-D-galacturonate + [(1-&gt;4)-alpha-D-galacturonosyl](n-1). In terms of biological role, specific in hydrolyzing the terminal glycosidic bond of polygalacturonic acid and oligogalacturonates. This Neosartorya fischeri (strain ATCC 1020 / DSM 3700 / CBS 544.65 / FGSC A1164 / JCM 1740 / NRRL 181 / WB 181) (Aspergillus fischerianus) protein is Putative galacturan 1,4-alpha-galacturonidase C (rgxC).